The primary structure comprises 155 residues: Chaperone protein IpgC (155 aa).

The protein belongs to the LcrH/SycD chaperone family.

It localises to the cytoplasm. Functionally, assists the correct folding of nascent IpaB. Once it is bound to IpaB, it binds to IpaC and impedes their premature association that would lead to their degradation in the absence of IpcG. This chain is Chaperone protein IpgC (ipgC), found in Shigella dysenteriae.